The primary structure comprises 156 residues: Endoribonuclease YbeY (156 aa).

Residues His-122, His-126, and His-132 each contribute to the Zn(2+) site.

The protein belongs to the endoribonuclease YbeY family. Zn(2+) serves as cofactor.

It localises to the cytoplasm. Functionally, single strand-specific metallo-endoribonuclease involved in late-stage 70S ribosome quality control and in maturation of the 3' terminus of the 16S rRNA. The polypeptide is Endoribonuclease YbeY (Bacillus cereus (strain G9842)).